The sequence spans 264 residues: Neurexophilin-2 (264 aa).

The first 22 residues, 1 to 22 (MRLRPLPLVVVPGLLQLLFCDS), serve as a signal peptide directing secretion. The tract at residues 23 to 90 (KEVVHATEGL…WDWLANITEI (68 aa)) is II. Residues Asn-86, Asn-139, Asn-149, and Asn-155 are each glycosylated (N-linked (GlcNAc...) asparagine). The interval 91–169 (QEPLARTKRR…LVPPSKVVEF (79 aa)) is III. Residues 170–178 (EVSPQSTLE) form an IV (linker domain) region. A v (Cys-rich) region spans residues 179–264 (TKESKSFNCR…HSETPYLSSG (86 aa)).

Belongs to the neurexophilin family. May be proteolytically processed at the boundary between the N-terminal non-conserved and the central conserved domain in neuron-like cells. Expressed in brain and kidney.

The protein resides in the secreted. In terms of biological role, may be signaling molecules that resemble neuropeptides and that act by binding to alpha-neurexins and possibly other receptors. The polypeptide is Neurexophilin-2 (NXPH2) (Homo sapiens (Human)).